Here is a 646-residue protein sequence, read N- to C-terminus: Rho guanine nucleotide exchange factor 7 (646 aa).

Residues 6-65 enclose the SH3 domain; the sequence is NSQLVVRAKFNFQQTNEDELSFSKGDVIHVTRVEEGGWWEGTHNGRTGWFPSNYVREIKP. Phosphoserine is present on residues serine 7, serine 71, and serine 79. Residues 93–273 enclose the DH domain; the sequence is YYNVVLQNIL…KNLSAQCQEV (181 aa). A PH domain is found at 295–400; that stretch reads DIKTLGSVTY…WVEHLQRQTK (106 aa). Serine 340 is subject to Phosphoserine. Disordered stretches follow at residues 402–464 and 500–520; these read TSVS…GPLE and KTMK…DEEF. Residues 415–428 are compositionally biased toward polar residues; that stretch reads PSHTLPSHPLTPSS. Residues 500 to 512 are compositionally biased toward basic residues; it reads KTMKKLLPKRKPE. 2 positions are modified to phosphoserine: serine 516 and serine 560.

As to quaternary structure, interacts with SCRIB; interaction is direct and may play a role in regulation of apoptosis. Interacts with PAK kinases through the SH3 domain. Interacts with GIT1 and probably TGFB1I1. Interacts with ITCH and PARVB. Interacts with FRMPD4 (via N-terminus). Interacts with CaMK1. Interacts with PTK2/FAK1 and RAC1. Interacts with BIN2. Interacts with YWHAZ. Interacts (via PH domain) with NOX1 (via FAD-binding FR-type domain). Post-translationally, phosphorylated on Ser-516 by CaMK1; enhancement of GEF activity and downstream activation of RAC1. Phosphorylated by PTK2/FAK1; this promotes interaction with RAC1.

Its subcellular location is the cell junction. It is found in the focal adhesion. The protein localises to the cell projection. It localises to the ruffle. The protein resides in the cytoplasm. Its subcellular location is the cell cortex. It is found in the lamellipodium. Acts as a RAC1 guanine nucleotide exchange factor (GEF) and can induce membrane ruffling. Functions in cell migration, attachment and cell spreading. Promotes targeting of RAC1 to focal adhesions. May function as a positive regulator of apoptosis. Downstream of NMDA receptors and CaMKK-CaMK1 signaling cascade, promotes the formation of spines and synapses in hippocampal neurons. This Rattus norvegicus (Rat) protein is Rho guanine nucleotide exchange factor 7 (Arhgef7).